Here is an 86-residue protein sequence, read N- to C-terminus: BolA-like protein 2 (86 aa).

An N-acetylmethionine modification is found at M1.

The protein belongs to the BolA/IbaG family. In terms of assembly, interacts with GLRX3; forms a heterotrimeric complex composed by two BOLA2 molecules and one GLRX3 molecule; linked by [2Fe-2S] clusters.

The protein localises to the cytoplasm. Its subcellular location is the nucleus. Its function is as follows. Acts as a cytosolic iron-sulfur (Fe-S) cluster assembly factor that facilitates [2Fe-2S] cluster insertion into a subset of cytosolic proteins. Acts together with the monothiol glutaredoxin GLRX3. The sequence is that of BolA-like protein 2 (Bola2) from Mus musculus (Mouse).